A 196-amino-acid chain; its full sequence is MLEKEEIVSPNLEELKSHYHSIITLLGEDAGREGLLKTPERVAKAMLSLTKGYHMDPHEVLRSAKFQEEYSQMVIVKDIDFFSLCEHHMLPFYGKAHVAYIPNGYITGLSKIARVVDIFSHRLQVQERMTLQIKDCIQETLNPLGVMVVVEAKHMCMQMRGVEKQNSITTTSDFTGAFNQAKTREEFMNLIQHGRV.

Zn(2+) contacts are provided by C85, H88, and C156.

The protein belongs to the GTP cyclohydrolase I family. As to quaternary structure, toroid-shaped homodecamer, composed of two pentamers of five dimers.

The enzyme catalyses GTP + H2O = 7,8-dihydroneopterin 3'-triphosphate + formate + H(+). It participates in cofactor biosynthesis; 7,8-dihydroneopterin triphosphate biosynthesis; 7,8-dihydroneopterin triphosphate from GTP: step 1/1. This Bacteroides thetaiotaomicron (strain ATCC 29148 / DSM 2079 / JCM 5827 / CCUG 10774 / NCTC 10582 / VPI-5482 / E50) protein is GTP cyclohydrolase 1.